The following is a 176-amino-acid chain: Prepronociceptin (176 aa).

A signal peptide spans 1-19 (MKILFCDLLLLSLFSSVSS). 2 consecutive propeptides follow at residues 20-95 (SCQK…MQHL) and 169-176 (TLHQNGNA).

It belongs to the opioid neuropeptide precursor family. Specific enzymatic cleavages at paired basic residues probably yield other active peptides besides nociceptin. In terms of processing, the N-terminal domain contains 6 conserved cysteines thought to be involved in disulfide bonding and/or processing.

The protein resides in the secreted. Ligand of the opioid receptor-like receptor OPRL1. It may act as a transmitter in the brain by modulating nociceptive and locomotor behavior. May be involved in neuronal differentiation and development. Functionally, blocks nociceptin action in pain transmission by inhibiting nociceptin-induced hyperalgesia and allodynia. In terms of biological role, has potent analgesic activity. The protein is Prepronociceptin (PNOC) of Bos taurus (Bovine).